The chain runs to 141 residues: Large ribosomal subunit protein uL11 (141 aa).

It belongs to the universal ribosomal protein uL11 family. As to quaternary structure, part of the ribosomal stalk of the 50S ribosomal subunit. Interacts with L10 and the large rRNA to form the base of the stalk. L10 forms an elongated spine to which L12 dimers bind in a sequential fashion forming a multimeric L10(L12)X complex. One or more lysine residues are methylated.

Functionally, forms part of the ribosomal stalk which helps the ribosome interact with GTP-bound translation factors. The protein is Large ribosomal subunit protein uL11 of Streptococcus uberis (strain ATCC BAA-854 / 0140J).